A 286-amino-acid polypeptide reads, in one-letter code: Thymidylate synthase (286 aa).

A dUMP-binding site is contributed by 140–141; sequence RR. The Nucleophile role is filled by Cys161. DUMP is bound by residues 185–188, Asn196, and 226–228; these read RSND and HIY. Asp188 contacts (6R)-5,10-methylene-5,6,7,8-tetrahydrofolate. A (6R)-5,10-methylene-5,6,7,8-tetrahydrofolate-binding site is contributed by Ala285.

The protein belongs to the thymidylate synthase family. Bacterial-type ThyA subfamily. In terms of assembly, homodimer.

The protein localises to the cytoplasm. It carries out the reaction dUMP + (6R)-5,10-methylene-5,6,7,8-tetrahydrofolate = 7,8-dihydrofolate + dTMP. Its pathway is pyrimidine metabolism; dTTP biosynthesis. Functionally, catalyzes the reductive methylation of 2'-deoxyuridine-5'-monophosphate (dUMP) to 2'-deoxythymidine-5'-monophosphate (dTMP) while utilizing 5,10-methylenetetrahydrofolate (mTHF) as the methyl donor and reductant in the reaction, yielding dihydrofolate (DHF) as a by-product. This enzymatic reaction provides an intracellular de novo source of dTMP, an essential precursor for DNA biosynthesis. This chain is Thymidylate synthase, found in Streptococcus thermophilus (strain CNRZ 1066).